A 300-amino-acid chain; its full sequence is Neutral protease NprE (300 aa).

Residue Asp-139 coordinates Ca(2+). Zn(2+) is bound at residue His-143. Glu-144 is an active-site residue. Zn(2+)-binding residues include His-147 and Glu-167. Residues Asp-178, Asp-181, Asp-183, and Glu-186 each coordinate Ca(2+). His-228 (proton donor) is an active-site residue.

This sequence belongs to the peptidase M4 family. The cofactor is Ca(2+). It depends on Zn(2+) as a cofactor.

It localises to the secreted. The enzyme catalyses Similar, but not identical, to that of thermolysin.. In terms of biological role, extracellular zinc metalloprotease. The sequence is that of Neutral protease NprE (nprE) from Bacillus pumilus (Bacillus mesentericus).